Reading from the N-terminus, the 198-residue chain is dTTP/UTP pyrophosphatase (198 aa).

D76 acts as the Proton acceptor in catalysis.

This sequence belongs to the Maf family. YhdE subfamily. A divalent metal cation is required as a cofactor.

It is found in the cytoplasm. It carries out the reaction dTTP + H2O = dTMP + diphosphate + H(+). The catalysed reaction is UTP + H2O = UMP + diphosphate + H(+). In terms of biological role, nucleoside triphosphate pyrophosphatase that hydrolyzes dTTP and UTP. May have a dual role in cell division arrest and in preventing the incorporation of modified nucleotides into cellular nucleic acids. The polypeptide is dTTP/UTP pyrophosphatase (Shewanella denitrificans (strain OS217 / ATCC BAA-1090 / DSM 15013)).